Consider the following 342-residue polypeptide: Anthranilate phosphoribosyltransferase (342 aa).

5-phospho-alpha-D-ribose 1-diphosphate contacts are provided by residues Gly79, 82 to 83 (GD), Thr87, 89 to 92 (NIST), 107 to 115 (KHCNQRISS), and Ser119. Residue Gly79 participates in anthranilate binding. Ser91 is a binding site for Mg(2+). Asn110 lines the anthranilate pocket. An anthranilate-binding site is contributed by Arg165. Mg(2+) contacts are provided by Asp223 and Glu224.

Belongs to the anthranilate phosphoribosyltransferase family. Homodimer. It depends on Mg(2+) as a cofactor.

It catalyses the reaction N-(5-phospho-beta-D-ribosyl)anthranilate + diphosphate = 5-phospho-alpha-D-ribose 1-diphosphate + anthranilate. It functions in the pathway amino-acid biosynthesis; L-tryptophan biosynthesis; L-tryptophan from chorismate: step 2/5. In terms of biological role, catalyzes the transfer of the phosphoribosyl group of 5-phosphorylribose-1-pyrophosphate (PRPP) to anthranilate to yield N-(5'-phosphoribosyl)-anthranilate (PRA). The polypeptide is Anthranilate phosphoribosyltransferase (Buchnera aphidicola subsp. Acyrthosiphon pisum (strain 5A)).